A 704-amino-acid polypeptide reads, in one-letter code: Seven transmembrane domain-containing serine/threonine-protein kinase 2 (704 aa).

Residues M1–E5 lie on the Extracellular side of the membrane. Residues F6–S26 form a helical membrane-spanning segment. At S27–K42 the chain is on the cytoplasmic side. Residues I43–G63 traverse the membrane as a helical segment. Residues M64–N76 are Extracellular-facing. The helical transmembrane segment at F77–L97 threads the bilayer. Residues P98–N121 lie on the Cytoplasmic side of the membrane. A helical membrane pass occupies residues I122–E142. Residues K143–D185 lie on the Extracellular side of the membrane. N-linked (GlcNAc...) asparagine glycans are attached at residues N147 and N158. Residues P186–H206 form a helical membrane-spanning segment. Over S207–K224 the chain is Cytoplasmic. The chain crosses the membrane as a helical span at residues L225–I245. The Extracellular segment spans residues D246–Y265. N251 carries N-linked (GlcNAc...) asparagine glycosylation. A helical transmembrane segment spans residues I266–I286. Over E287 to K704 the chain is Cytoplasmic. The Protein kinase domain maps to I317 to N682. ATP is bound by residues L323 to M331 and K350. The active-site Proton acceptor is D506.

It belongs to the protein kinase superfamily. Ser/Thr protein kinase family.

It is found in the membrane. The enzyme catalyses L-seryl-[protein] + ATP = O-phospho-L-seryl-[protein] + ADP + H(+). It carries out the reaction L-threonyl-[protein] + ATP = O-phospho-L-threonyl-[protein] + ADP + H(+). The polypeptide is Seven transmembrane domain-containing serine/threonine-protein kinase 2 (7tmk2) (Dictyostelium discoideum (Social amoeba)).